We begin with the raw amino-acid sequence, 425 residues long: AFP homolog 2 (425 aa).

Disordered stretches follow at residues 1–207 (MDDD…SGTE) and 288–327 (PFAGRVPSNSATAKGEGKQPVAEEGSSEDASERPTGDNSN). The necessary and sufficient for the interaction with TOPLESS stretch occupies residues 7 to 17 (LELSLGLSCGG). Residues 20 to 34 (GKAKGNNNNNAGSSS) show a composition bias toward low complexity. Basic and acidic residues predominate over residues 37-54 (YRAEGGDRSAKVIDDFKN). A compositionally biased stretch (low complexity) spans 66-81 (PSSGSQRSDSGQQPPQ). Residues 124–140 (NDDKKKEKDSSHVDMHE) are compositionally biased toward basic and acidic residues. Polar residues-rich tracts occupy residues 146–158 (SHVSTATDEGSTA), 185–197 (TDTNIVDNLTGQR), and 288–299 (PFAGRVPSNSAT). Residues 322–425 (TGDNSNLNTA…MGMTAASAHT (104 aa)) form a necessary and sufficient for the interaction with the JAZ proteins region.

Belongs to the Ninja family. In terms of assembly, component of a complex at least composed of TOPLESS, TPR2, TPR3, TIFY4B/PPD2, MYC3/ATR2 and TIFY3B/JAZ12. Interacts (via C-terminus) with TIFY10A/JAZ1; TIFY10B/JAZ2; TIFY6B/JAZ3; TIFY6A/JAZ4; TIFY11A/JAZ5; TIFY11B/JAZ6; TIFY7/JAZ9; TIFY9/JAZ10; TIFY3A/JAZ11; TIFY3B/JAZ12; TIFY4A/PPD1; TIFY4B/PPD2 and TIFY8 (via TIFY domain). Interacts with TOPLESS. Interacts with PAT1H1.

It localises to the nucleus. Its function is as follows. Acts as a transcriptional repressor. Negative regulator of jasmonate responses. Connects the JAZ proteins and the non-JAZ protein TIFY8 with the TOPLESS corepressors. The sequence is that of AFP homolog 2 from Arabidopsis thaliana (Mouse-ear cress).